A 618-amino-acid chain; its full sequence is tRNA endonuclease vms-1 (618 aa).

Residues 59-85 (DQCTTCNCPVDFGDRAVLLEHYQSLFH) form a C2H2-type zinc finger. The VLRF1 domain occupies 170–311 (RPFDCAIFLW…SDCWQRLQQV (142 aa)). Q213 is an active-site residue. ANK repeat units lie at residues 437-466 (NRST…CDSS) and 470-496 (GAGL…VKNE). Positions 502-539 (ARTHIPEPKKKVELTEEQEREQAERKKEKKARQKEKEK) are disordered. Residues 505 to 515 (HIPEPKKKVEL) are compositionally biased toward basic and acidic residues. Positions 510-557 (KKKVELTEEQEREQAERKKEKKARQKEKEKLKKEIAKRDVEEMEERQK) form a coiled coil.

It belongs to the ANKZF1/VMS1 family. As to expression, in larval stages and in adults, expressed in intestinal cells, specific neurons in the head and the tail, and in the ventral nerve cord.

It localises to the cytoplasm. The protein localises to the mitochondrion. Functionally, endonuclease that cleaves polypeptidyl-tRNAs downstream of the ribosome-associated quality control (RQC) pathway to release incompletely synthesized polypeptides for degradation. The RQC pathway disassembles aberrantly stalled translation complexes to recycle or degrade the constituent parts. Dispensable for viability and growth but is required for protection against oxidative stress and for wild-type life span. This Caenorhabditis elegans protein is tRNA endonuclease vms-1 (vms-1).